Reading from the N-terminus, the 388-residue chain is MPSEETVEKTLKRLQTFSGSHSVVVGLSGGVDSSLTAALLCKAGWDVEGLTLWLMKGKGSCCSDGLVDAAGICDQLGIKHHIVDSKEIFQKEIINNVLKGYEEGITPLPCSRCNKSVKFSEMLKWVKENKNIEKIATGHYARIRYSNESFNENDLPSDGIKRHKLLRGKDLNKDQSYFLYDLPQEILGKTIFPLGELTKEITRIEALKHSLKTAKKPESQDLCLAEHYGSMNAFIDKYLPQKKGEVVLKNGQIIGSHNGIQHFTIGQRKGLGIAWEVPLHVVEIDASLNRVIVAPREDSGKSECIVKDINWVSIEAPQEPIEVEVQIRYRSKAMKAKLIPIFDSNKENYCYKCNIHFEKDQFSITPGQAAVFYKGDYVLGGGLISKEY.

Residues 26-33 (GLSGGVDS) and L52 contribute to the ATP site. The Nucleophile role is filled by C113. C113 and C223 are joined by a disulfide. G138 provides a ligand contact to ATP. Residues 173–175 (KDQ) are interaction with tRNA. The active-site Cysteine persulfide intermediate is the C223. The tract at residues 328–329 (RY) is interaction with tRNA.

This sequence belongs to the MnmA/TRMU family.

Its subcellular location is the cytoplasm. It carries out the reaction S-sulfanyl-L-cysteinyl-[protein] + uridine(34) in tRNA + AH2 + ATP = 2-thiouridine(34) in tRNA + L-cysteinyl-[protein] + A + AMP + diphosphate + H(+). Catalyzes the 2-thiolation of uridine at the wobble position (U34) of tRNA, leading to the formation of s(2)U34. This is tRNA-specific 2-thiouridylase MnmA from Prochlorococcus marinus (strain NATL2A).